The chain runs to 298 residues: tRNA dimethylallyltransferase (298 aa).

12–19 (GPTASGKT) serves as a coordination point for ATP. Residue 14–19 (TASGKT) coordinates substrate. Residues 37–40 (DSRQ) are interaction with substrate tRNA.

The protein belongs to the IPP transferase family. In terms of assembly, monomer. Mg(2+) is required as a cofactor.

It carries out the reaction adenosine(37) in tRNA + dimethylallyl diphosphate = N(6)-dimethylallyladenosine(37) in tRNA + diphosphate. Catalyzes the transfer of a dimethylallyl group onto the adenine at position 37 in tRNAs that read codons beginning with uridine, leading to the formation of N6-(dimethylallyl)adenosine (i(6)A). The chain is tRNA dimethylallyltransferase from Synechococcus sp. (strain CC9902).